The sequence spans 358 residues: Phospho-N-acetylmuramoyl-pentapeptide-transferase (358 aa).

The next 10 helical transmembrane spans lie at 26–46, 70–90, 94–114, 134–154, 169–189, 197–217, 234–254, 261–281, 286–306, and 335–355; these read AIYA…WLID, GTPT…TLLW, TNVY…VGFV, MLWL…YPPF, ELGL…SNAV, GLAI…AYLA, AGEL…FLWF, VFMG…IAVI, IVLV…IVQV, and KIIV…LSTL.

This sequence belongs to the glycosyltransferase 4 family. MraY subfamily. Mg(2+) serves as cofactor.

It is found in the cell inner membrane. The catalysed reaction is UDP-N-acetyl-alpha-D-muramoyl-L-alanyl-gamma-D-glutamyl-meso-2,6-diaminopimeloyl-D-alanyl-D-alanine + di-trans,octa-cis-undecaprenyl phosphate = di-trans,octa-cis-undecaprenyl diphospho-N-acetyl-alpha-D-muramoyl-L-alanyl-D-glutamyl-meso-2,6-diaminopimeloyl-D-alanyl-D-alanine + UMP. It participates in cell wall biogenesis; peptidoglycan biosynthesis. Catalyzes the initial step of the lipid cycle reactions in the biosynthesis of the cell wall peptidoglycan: transfers peptidoglycan precursor phospho-MurNAc-pentapeptide from UDP-MurNAc-pentapeptide onto the lipid carrier undecaprenyl phosphate, yielding undecaprenyl-pyrophosphoryl-MurNAc-pentapeptide, known as lipid I. The chain is Phospho-N-acetylmuramoyl-pentapeptide-transferase from Syntrophotalea carbinolica (strain DSM 2380 / NBRC 103641 / GraBd1) (Pelobacter carbinolicus).